Reading from the N-terminus, the 99-residue chain is CLAVATA3/ESR (CLE)-related protein 41 (99 aa).

A signal peptide spans 1-34 (MATSNDQTNTKSSHSRTLLLLFIFLSLLLFSSLT). The disordered stretch occupies residues 60 to 99 (ASSTMDLRPKASTRRSRTSRRREFGNDAHEVPSGPNPISN). The span at 70–79 (ASTRRSRTSR) shows a compositional bias: basic residues. Residues 80-89 (RREFGNDAHE) are compositionally biased toward basic and acidic residues. Hydroxyproline occurs at positions 91 and 94. Residue Pro-94 is glycosylated (O-linked (Ara...) hydroxyproline).

This sequence belongs to the CLV3/ESR signal peptide family. In terms of assembly, CLE41p interacts specifically with the leucine-rich repeat receptor-like protein kinase TDR. In terms of processing, the O-glycosylation (arabinosylation) of the hydroxyproline Pro-94 enhances binding affinity of the CLE41p peptide for its receptor. Mostly expressed in inflorescence and roots, and, to a lower extent, in seedlings, flowers, leaves and siliques. Observed along the vascular strands in cotyledons, leaves and roots, but not in shoot apical meristems (SAM). Restricted to the phloem and the neighboring pericycle cells in the roots and hypocotyls.

It localises to the secreted. The protein resides in the extracellular space. In terms of biological role, extracellular signal peptide that regulates cell fate. May act with TDR as a ligand-receptor pair in a signal transduction pathway that represses tracheary element differentiation but promotes the formation of procambial cells adjacent to phloem cells in the veins in an auxin-dependent manner. Regulates the transition of protophloem cells from proliferation to differentiation, thus impinging on postembryonic growth capacity of the root meristem; this signaling pathway requires CRN and CLV2. This is CLAVATA3/ESR (CLE)-related protein 41 from Arabidopsis thaliana (Mouse-ear cress).